We begin with the raw amino-acid sequence, 545 residues long: Esterase-5B (545 aa).

The first 19 residues, 1–19, serve as a signal peptide directing secretion; the sequence is MYCEKLILLLGCFWISSSA. Cys-84 and Cys-103 form a disulfide bridge. N-linked (GlcNAc...) asparagine glycosylation occurs at Asn-113. The active-site Acyl-ester intermediate is the Ser-207. The cysteines at positions 259 and 271 are disulfide-linked. The N-linked (GlcNAc...) asparagine glycan is linked to Asn-421. The Charge relay system role is filled by His-467. N-linked (GlcNAc...) asparagine glycosylation occurs at Asn-507. The cysteines at positions 515 and 536 are disulfide-linked.

Belongs to the type-B carboxylesterase/lipase family. As to quaternary structure, homodimer.

It is found in the secreted. It catalyses the reaction a carboxylic ester + H2O = an alcohol + a carboxylate + H(+). This Drosophila miranda (Fruit fly) protein is Esterase-5B (Est-5B).